The following is a 564-amino-acid chain: CTP synthase (564 aa).

The segment at 1–272 (MARPKNVKHI…DIRVLKKLGL (272 aa)) is amidoligase domain. Residue Ser-18 coordinates CTP. Ser-18 serves as a coordination point for UTP. ATP is bound at residue 19 to 24 (SLGKGI). Position 59 (Tyr-59) interacts with L-glutamine. An ATP-binding site is contributed by Asp-76. Mg(2+) is bound by residues Asp-76 and Glu-146. CTP-binding positions include 153 to 155 (DIE), 193 to 198 (KTKPTQ), and Lys-229. UTP-binding positions include 193–198 (KTKPTQ) and Lys-229. One can recognise a Glutamine amidotransferase type-1 domain in the interval 299 to 543 (TIAICGKYTE…VAAAKEFAHG (245 aa)). Gly-363 is an L-glutamine binding site. Cys-390 (nucleophile; for glutamine hydrolysis) is an active-site residue. L-glutamine-binding positions include 391 to 394 (LGMQ), Glu-414, and Arg-471. Active-site residues include His-516 and Glu-518.

The protein belongs to the CTP synthase family. As to quaternary structure, homotetramer.

The catalysed reaction is UTP + L-glutamine + ATP + H2O = CTP + L-glutamate + ADP + phosphate + 2 H(+). It catalyses the reaction L-glutamine + H2O = L-glutamate + NH4(+). The enzyme catalyses UTP + NH4(+) + ATP = CTP + ADP + phosphate + 2 H(+). Its pathway is pyrimidine metabolism; CTP biosynthesis via de novo pathway; CTP from UDP: step 2/2. With respect to regulation, allosterically activated by GTP, when glutamine is the substrate; GTP has no effect on the reaction when ammonia is the substrate. The allosteric effector GTP functions by stabilizing the protein conformation that binds the tetrahedral intermediate(s) formed during glutamine hydrolysis. Inhibited by the product CTP, via allosteric rather than competitive inhibition. Its function is as follows. Catalyzes the ATP-dependent amination of UTP to CTP with either L-glutamine or ammonia as the source of nitrogen. Regulates intracellular CTP levels through interactions with the four ribonucleotide triphosphates. The sequence is that of CTP synthase from Prosthecochloris aestuarii (strain DSM 271 / SK 413).